The sequence spans 303 residues: N-acetyl-D-glucosamine kinase (303 aa).

ATP-binding positions include 4-11 (GFDIGGSK) and 133-140 (GVGGGLIV). The Zn(2+) site is built by His157, Cys177, Cys179, and Cys184.

The protein belongs to the ROK (NagC/XylR) family. NagK subfamily.

The catalysed reaction is N-acetyl-D-glucosamine + ATP = N-acetyl-D-glucosamine 6-phosphate + ADP + H(+). Its pathway is cell wall biogenesis; peptidoglycan recycling. In terms of biological role, catalyzes the phosphorylation of N-acetyl-D-glucosamine (GlcNAc) derived from cell-wall degradation, yielding GlcNAc-6-P. In Erwinia tasmaniensis (strain DSM 17950 / CFBP 7177 / CIP 109463 / NCPPB 4357 / Et1/99), this protein is N-acetyl-D-glucosamine kinase.